Reading from the N-terminus, the 165-residue chain is MKNKIFLIGMPGCGKSTIGEIIAKELMLKFIDMDICIEEKTSKTISELFEQGEDYFRDIESETCKEIIKYDNVVIATGGGVVKKDINIETLKNNGLVIFIDRPVEKIISDIDVSRRPLLKNGKERIIGLYKERYDIYKKACHKIVVNGSTIDEVVGEIKKIIINN.

12 to 17 (GCGKST) is a binding site for ATP. S16 is a Mg(2+) binding site. Residues D34, R57, and G79 each contribute to the substrate site. An ATP-binding site is contributed by R116. Position 133 (R133) interacts with substrate.

The protein belongs to the shikimate kinase family. In terms of assembly, monomer. The cofactor is Mg(2+).

It localises to the cytoplasm. The catalysed reaction is shikimate + ATP = 3-phosphoshikimate + ADP + H(+). It participates in metabolic intermediate biosynthesis; chorismate biosynthesis; chorismate from D-erythrose 4-phosphate and phosphoenolpyruvate: step 5/7. Its function is as follows. Catalyzes the specific phosphorylation of the 3-hydroxyl group of shikimic acid using ATP as a cosubstrate. In Clostridium botulinum (strain Eklund 17B / Type B), this protein is Shikimate kinase.